A 256-amino-acid chain; its full sequence is MVSAVLDSRFNVALWIFQRHPKYDVVDALRRCQHRCWEFVDPHPPRMQRQLSSTNLSFHITDGCHPYPAVQADGSVSGGLEWSGADDGDCKGSAWGSQVYARSAWYNNKYAIMYAWYFPKGKGRQHVHKLHSGHRHEWEFAVVWVDQPSADHSNLLGVSMSFGPSFHKEAPVQPEHVVGSSIKLDSYSTFWGAKQGLRVTTDIGTTQDLIQWEQLTDAARASLTETNFDIDEAVVPVEMPLKDDVFQLKLNSTYPF.

A Conserved undecapeptide motif motif is present at residues 111–121 (AIMYAWYFPKG). Positions 133–139 (GHRHEWE) match the Conserved heptapeptide motif motif.

This sequence belongs to the Necrosis inducing protein (NPP1) family.

It localises to the secreted. Functionally, secreted effector that acts as a pathogen-associated molecular pattern (PAMP) recognized by the plant immune system. The polypeptide is Necrosis-inducing protein NPP1 (Phytophthora cinnamomi (Cinnamon fungus)).